The primary structure comprises 453 residues: MTPNTSPGSTLPRAQVLAERAFSTLEKFLHIEAFSGVVLLLAAAAALIWANSPYADGYHHFWHTAVSFSIGSWSVSESLHFLINDGLMTIFFLVVGMEIRREIHEGALANMRLAALPLAAALGGVVVPALIYFILNPGGEAAHGWAVPTATDIAFAVGVLALLGRSIPSNVRVFLLALAIIDDIVAVLIIAVFYSGGMDYSGFIIAAVGILMVLGMQRIGIASAYPYVIPGAVLWFGLLKTGAHPTLAGVVLGLMTPVFAPHARTHPLELASKALKDLWNQTANSTPDPHHLAHPLKQLRRAQRDLLPPVSRVQMALHPYVAFGIMPLFALANAGVSLDGIDMSATGSMSVMLGVLIALVAGKPLGIIGASFLMVRMGWCALPPGVTWGGVCLVGLLAGIGFTMSIFIATLAFNDPNLLGAAKLGILLASLSAAVLGLAWGFFQAKRKQPAVA.

11 helical membrane passes run 28 to 48, 79 to 99, 115 to 135, 144 to 164, 173 to 193, 196 to 216, 241 to 261, 321 to 341, 355 to 375, 393 to 413, and 424 to 444; these read FLHIEAFSGVVLLLAAAAALI, LHFLINDGLMTIFFLVVGMEI, ALPLAAALGGVVVPALIYFIL, GWAVPTATDIAFAVGVLALLG, VFLLALAIIDDIVAVLIIAVF, GGMDYSGFIIAAVGILMVLGM, TGAHPTLAGVVLGLMTPVFAP, VAFGIMPLFALANAGVSLDGI, VLIALVAGKPLGIIGASFLMV, LVGLLAGIGFTMSIFIATLAF, and LGILLASLSAAVLGLAWGFFQ.

It belongs to the NhaA Na(+)/H(+) (TC 2.A.33) antiporter family.

The protein resides in the cell inner membrane. It catalyses the reaction Na(+)(in) + 2 H(+)(out) = Na(+)(out) + 2 H(+)(in). In terms of biological role, na(+)/H(+) antiporter that extrudes sodium in exchange for external protons. In Janthinobacterium sp. (strain Marseille) (Minibacterium massiliensis), this protein is Na(+)/H(+) antiporter NhaA.